Here is a 184-residue protein sequence, read N- to C-terminus: Putative manganese efflux pump MntP (184 aa).

Helical transmembrane passes span 3-23, 36-56, 65-85, 103-123, 126-146, and 163-183; these read LLSMVLIGVGLAMDAFSISVS, ALISALSFGTFQAAMPVLGWV, VSALAPWAAFILLLIIGLKMI, LLVLSIATSIDAFAVGVSFAL, ISIWLPVIVIGLITFILSLAG, and ALGGLILILIGLKILLENVSF.

It belongs to the MntP (TC 9.B.29) family.

It is found in the cell membrane. In terms of biological role, probably functions as a manganese efflux pump. In Methanothermobacter thermautotrophicus (strain ATCC 29096 / DSM 1053 / JCM 10044 / NBRC 100330 / Delta H) (Methanobacterium thermoautotrophicum), this protein is Putative manganese efflux pump MntP.